We begin with the raw amino-acid sequence, 896 residues long: UPF0182 protein GM21_2279 (896 aa).

Helical transmembrane passes span M6 to F26, V46 to L66, L99 to G119, L158 to V180, L201 to F221, T245 to W265, and L271 to P291.

This sequence belongs to the UPF0182 family.

The protein resides in the cell membrane. The sequence is that of UPF0182 protein GM21_2279 from Geobacter sp. (strain M21).